The sequence spans 687 residues: DnaJ protein ERDJ2A (687 aa).

Over methionine 1–serine 8 the chain is Lumenal. A helical transmembrane segment spans residues alanine 9 to valine 29. Residues lysine 30–asparagine 65 lie on the Cytoplasmic side of the membrane. A helical membrane pass occupies residues phenylalanine 66–tyrosine 86. Residues tyrosine 87 to glycine 190 are Lumenal-facing. N-linked (GlcNAc...) asparagine glycosylation occurs at asparagine 90. Residues aspartate 99–glycine 164 form the J domain. Residues glycine 191–isoleucine 211 traverse the membrane as a helical segment. The SEC63 domain occupies proline 205 to lysine 603. Topologically, residues tyrosine 212–glutamate 687 are cytoplasmic. The disordered stretch occupies residues serine 619–glutamate 687. Residues alanine 623–glutamate 654 are compositionally biased toward acidic residues.

In terms of assembly, interacts with OEP61/TPR7. Expressed in leaves, flower buds and flowers.

Its subcellular location is the endoplasmic reticulum membrane. Its function is as follows. Required for integral membrane and secreted preprotein translocation across the endoplasmic reticulum membrane. The polypeptide is DnaJ protein ERDJ2A (ERDJ2A) (Arabidopsis thaliana (Mouse-ear cress)).